The following is a 212-amino-acid chain: uncharacterized protein (212 aa).

This sequence belongs to the flavoredoxin family. It depends on FMN as a cofactor.

This is an uncharacterized protein from Methanothermobacter thermautotrophicus (strain ATCC 29096 / DSM 1053 / JCM 10044 / NBRC 100330 / Delta H) (Methanobacterium thermoautotrophicum).